Reading from the N-terminus, the 338-residue chain is Aspartate carbamoyltransferase catalytic subunit (338 aa).

2 residues coordinate carbamoyl phosphate: R57 and T58. Position 86 (K86) interacts with L-aspartate. Positions 107, 135, and 138 each coordinate carbamoyl phosphate. L-aspartate-binding residues include R172 and R234. Carbamoyl phosphate-binding residues include L274 and P275.

It belongs to the aspartate/ornithine carbamoyltransferase superfamily. ATCase family. Heterododecamer (2C3:3R2) of six catalytic PyrB chains organized as two trimers (C3), and six regulatory PyrI chains organized as three dimers (R2).

The enzyme catalyses carbamoyl phosphate + L-aspartate = N-carbamoyl-L-aspartate + phosphate + H(+). Its pathway is pyrimidine metabolism; UMP biosynthesis via de novo pathway; (S)-dihydroorotate from bicarbonate: step 2/3. Its function is as follows. Catalyzes the condensation of carbamoyl phosphate and aspartate to form carbamoyl aspartate and inorganic phosphate, the committed step in the de novo pyrimidine nucleotide biosynthesis pathway. The polypeptide is Aspartate carbamoyltransferase catalytic subunit (Cellvibrio japonicus (strain Ueda107) (Pseudomonas fluorescens subsp. cellulosa)).